The sequence spans 160 residues: Protein-export protein SecB (160 aa).

Belongs to the SecB family. As to quaternary structure, homotetramer, a dimer of dimers. One homotetramer interacts with 1 SecA dimer.

Its subcellular location is the cytoplasm. Functionally, one of the proteins required for the normal export of preproteins out of the cell cytoplasm. It is a molecular chaperone that binds to a subset of precursor proteins, maintaining them in a translocation-competent state. It also specifically binds to its receptor SecA. The chain is Protein-export protein SecB from Burkholderia multivorans (strain ATCC 17616 / 249).